Consider the following 274-residue polypeptide: Putative phosphoenolpyruvate synthase regulatory protein (274 aa).

154–161 (AVSRSGKT) is a binding site for ADP.

This sequence belongs to the pyruvate, phosphate/water dikinase regulatory protein family. PSRP subfamily.

The catalysed reaction is [pyruvate, water dikinase] + ADP = [pyruvate, water dikinase]-phosphate + AMP + H(+). It carries out the reaction [pyruvate, water dikinase]-phosphate + phosphate + H(+) = [pyruvate, water dikinase] + diphosphate. Its function is as follows. Bifunctional serine/threonine kinase and phosphorylase involved in the regulation of the phosphoenolpyruvate synthase (PEPS) by catalyzing its phosphorylation/dephosphorylation. The sequence is that of Putative phosphoenolpyruvate synthase regulatory protein from Alkalilimnicola ehrlichii (strain ATCC BAA-1101 / DSM 17681 / MLHE-1).